The primary structure comprises 284 residues: Bifunctional protein FolD (284 aa).

NADP(+)-binding positions include 166–168 (GRS) and serine 191.

Belongs to the tetrahydrofolate dehydrogenase/cyclohydrolase family. Homodimer.

It carries out the reaction (6R)-5,10-methylene-5,6,7,8-tetrahydrofolate + NADP(+) = (6R)-5,10-methenyltetrahydrofolate + NADPH. The enzyme catalyses (6R)-5,10-methenyltetrahydrofolate + H2O = (6R)-10-formyltetrahydrofolate + H(+). It participates in one-carbon metabolism; tetrahydrofolate interconversion. Functionally, catalyzes the oxidation of 5,10-methylenetetrahydrofolate to 5,10-methenyltetrahydrofolate and then the hydrolysis of 5,10-methenyltetrahydrofolate to 10-formyltetrahydrofolate. This is Bifunctional protein FolD from Leptospira interrogans serogroup Icterohaemorrhagiae serovar copenhageni (strain Fiocruz L1-130).